The primary structure comprises 432 residues: Amino-acid acetyltransferase (432 aa).

Positions 286 to 432 (EVVREATIED…RNSKIFEKPL (147 aa)) constitute an N-acetyltransferase domain.

The protein belongs to the acetyltransferase family. ArgA subfamily.

It localises to the cytoplasm. The catalysed reaction is L-glutamate + acetyl-CoA = N-acetyl-L-glutamate + CoA + H(+). It participates in amino-acid biosynthesis; L-arginine biosynthesis; N(2)-acetyl-L-ornithine from L-glutamate: step 1/4. The sequence is that of Amino-acid acetyltransferase (argA) from Pseudomonas putida (strain ATCC 47054 / DSM 6125 / CFBP 8728 / NCIMB 11950 / KT2440).